The following is a 662-amino-acid chain: MINHITDNQFKLVSKYQPSGDQPQAIEQLVDNIEGGEKAQILMGATGTGKTYTMSQVISKVNKPTLVIAHNKTLAGQLYGEFKEFFPENAVEYFVSYYDYYQPEAYVPSSDTYIEKDSSVNDEIDKLRHSATSALLERNDVIVVASVSCIYGLGSPKEYADSVVSLRPGLEISRDKLLNDLVDIQFERNDIDFQRGRFRVRGDVVEIFPASRDEHAFRVEFFGDEIDRIREVEALTGQVLGEVDHLAIFPATHFVTNDDHMEVAIAKIQAELEEQLAVFEKEGKLLEAQRLKQRTEYDIEMLREMGYTNGVENYSRHMDGRSEGEPPYTLLDFFPDDFLIMIDESHMTIGQIKGMYNGDRSRKEMLVNYGFRLPSALDNRPLRREEFESHVHQIVYVSATPGDYENEQTETVIEQIIRPTGLLDPEVEVRPTMGQIDDLLGEINARVEKNERTFITTLTKKMAEDLTDYFKEMGIKVKYMHSDIKTLERTEIIRDLRLGVFDVLVGINLLREGIDVPEVSLVAILDADKEGFLRNERGLIQTIGRAARNSEGHVIMYADTVTQSMQRAIDETARRRKIQMAYNEEHGIVPQTIKKEIRDLIAVTKAVAKEEDKEVDINSLNKQERKELVKKLEKQMQEAVEVLDFELAAQIRDMMLEVKALD.

A Helicase ATP-binding domain is found at 31–188 (DNIEGGEKAQ…NDLVDIQFER (158 aa)). 44 to 51 (GATGTGKT) is a binding site for ATP. The short motif at 97–120 (YYDYYQPEAYVPSSDTYIEKDSSV) is the Beta-hairpin element. The Helicase C-terminal domain occupies 435 to 601 (QIDDLLGEIN…TIKKEIRDLI (167 aa)). A UVR domain is found at 626–661 (KELVKKLEKQMQEAVEVLDFELAAQIRDMMLEVKAL).

The protein belongs to the UvrB family. In terms of assembly, forms a heterotetramer with UvrA during the search for lesions. Interacts with UvrC in an incision complex.

It is found in the cytoplasm. Its function is as follows. The UvrABC repair system catalyzes the recognition and processing of DNA lesions. A damage recognition complex composed of 2 UvrA and 2 UvrB subunits scans DNA for abnormalities. Upon binding of the UvrA(2)B(2) complex to a putative damaged site, the DNA wraps around one UvrB monomer. DNA wrap is dependent on ATP binding by UvrB and probably causes local melting of the DNA helix, facilitating insertion of UvrB beta-hairpin between the DNA strands. Then UvrB probes one DNA strand for the presence of a lesion. If a lesion is found the UvrA subunits dissociate and the UvrB-DNA preincision complex is formed. This complex is subsequently bound by UvrC and the second UvrB is released. If no lesion is found, the DNA wraps around the other UvrB subunit that will check the other stand for damage. The chain is UvrABC system protein B from Streptococcus pneumoniae (strain ATCC 700669 / Spain 23F-1).